Here is a 451-residue protein sequence, read N- to C-terminus: AP-3 complex subunit mu (451 aa).

The region spanning 191-450 (NNEIYVDLVE…TSRAGDYIVR (260 aa)) is the MHD domain.

The protein belongs to the adaptor complexes medium subunit family. Adaptor protein complex 3 (AP-3) is a heterotetramer composed of 2 large adaptins (APL5 and APL6), a medium adaptin (APM3) and a small adaptin (APS3).

It is found in the golgi apparatus. The protein resides in the cytoplasmic vesicle membrane. Functionally, part of the AP-3 complex, an adaptor-related complex which is not clathrin-associated. The complex is associated with the Golgi region as well as more peripheral structures. It facilitates the budding of vesicles from the Golgi membrane and may be directly involved in trafficking to the vacuole. This is AP-3 complex subunit mu (APM3) from Eremothecium gossypii (strain ATCC 10895 / CBS 109.51 / FGSC 9923 / NRRL Y-1056) (Yeast).